A 100-amino-acid chain; its full sequence is Small ribosomal subunit protein uS14 (100 aa).

Belongs to the universal ribosomal protein uS14 family. In terms of assembly, part of the 30S ribosomal subunit. Contacts proteins S3 and S10.

Binds 16S rRNA, required for the assembly of 30S particles and may also be responsible for determining the conformation of the 16S rRNA at the A site. The chain is Small ribosomal subunit protein uS14 from Synechococcus sp. (strain RCC307).